Here is a 121-residue protein sequence, read N- to C-terminus: Large ribosomal subunit protein uL24 (121 aa).

This sequence belongs to the universal ribosomal protein uL24 family. In terms of assembly, part of the 50S ribosomal subunit.

Its function is as follows. One of two assembly initiator proteins, it binds directly to the 5'-end of the 23S rRNA, where it nucleates assembly of the 50S subunit. Functionally, located at the polypeptide exit tunnel on the outside of the subunit. In Methanocorpusculum labreanum (strain ATCC 43576 / DSM 4855 / Z), this protein is Large ribosomal subunit protein uL24.